The sequence spans 430 residues: Adenylosuccinate synthetase (430 aa).

Residues 11–17 (GDEGKGK) and 39–41 (GHS) contribute to the GTP site. Aspartate 12 serves as the catalytic Proton acceptor. Mg(2+)-binding residues include aspartate 12 and glycine 39. IMP is bound by residues 12–15 (DEGK), 37–40 (NAGH), threonine 129, arginine 143, asparagine 221, threonine 236, and arginine 300. Catalysis depends on histidine 40, which acts as the Proton donor. 296 to 302 (VSTGRKR) contributes to the substrate binding site. Residues arginine 302, 328 to 330 (KLD), and 412 to 414 (GTG) each bind GTP.

Belongs to the adenylosuccinate synthetase family. As to quaternary structure, homodimer. Requires Mg(2+) as cofactor.

It is found in the cytoplasm. It catalyses the reaction IMP + L-aspartate + GTP = N(6)-(1,2-dicarboxyethyl)-AMP + GDP + phosphate + 2 H(+). It functions in the pathway purine metabolism; AMP biosynthesis via de novo pathway; AMP from IMP: step 1/2. Functionally, plays an important role in the de novo pathway and in the salvage pathway of purine nucleotide biosynthesis. Catalyzes the first committed step in the biosynthesis of AMP from IMP. The sequence is that of Adenylosuccinate synthetase from Neurospora crassa (strain ATCC 24698 / 74-OR23-1A / CBS 708.71 / DSM 1257 / FGSC 987).